A 152-amino-acid chain; its full sequence is Histone H2B.1 (152 aa).

Residues Met1–Pro28 show a composition bias toward basic and acidic residues. Residues Met1 to Lys60 form a disordered region. N6-acetyllysine is present on residues Lys7 and Lys37. A Glycyl lysine isopeptide (Lys-Gly) (interchain with G-Cter in ubiquitin) cross-link involves residue Lys148.

Belongs to the histone H2B family. As to quaternary structure, the nucleosome is a histone octamer containing two molecules each of H2A, H2B, H3 and H4 assembled in one H3-H4 heterotetramer and two H2A-H2B heterodimers. The octamer wraps approximately 147 bp of DNA. Can be acetylated to form H2BK6ac and H2BK33ac. In terms of processing, monoubiquitinated to form H2BK143ub1; may give a specific tag for epigenetic transcriptional activation.

It is found in the nucleus. The protein localises to the chromosome. Its function is as follows. Core component of nucleosome. Nucleosomes wrap and compact DNA into chromatin, limiting DNA accessibility to the cellular machineries which require DNA as a template. Histones thereby play a central role in transcription regulation, DNA repair, DNA replication and chromosomal stability. DNA accessibility is regulated via a complex set of post-translational modifications of histones, also called histone code, and nucleosome remodeling. The chain is Histone H2B.1 from Triticum aestivum (Wheat).